The primary structure comprises 576 residues: F-actin capping regulator BSP1 (576 aa).

The disordered stretch occupies residues 24-50 (RYSNIPSSKPAGEALSPVRSHNSGEYR). Phosphoserine is present on residues Ser46, Ser79, and Ser88. Disordered regions lie at residues 132-160 (NDSN…PREK) and 173-316 (GRAD…KRIP). At Ser185 the chain carries Phosphoserine. Residues 191–206 (TRRDHIKITDGNEEKP) show a composition bias toward basic and acidic residues. Ser220 carries the post-translational modification Phosphoserine. Composition is skewed to polar residues over residues 243–255 (SRST…LSSL) and 264–279 (KSYN…TVKS). A compositionally biased stretch (pro residues) spans 304–313 (KPTPPSPPAK). Ser309 and Ser320 each carry phosphoserine. Residues 408–470 (SIPEAIKGIQ…LSLRNNLKKR (63 aa)) are interaction with F-actin. Residues 541 to 576 (DKYTTSRDETVKETKPLVHPNKNRTRGPRRKLPTRV) form a disordered region. The span at 544–556 (TTSRDETVKETKP) shows a compositional bias: basic and acidic residues. Residues 547–576 (RDETVKETKPLVHPNKNRTRGPRRKLPTRV) form an interaction with the F-actin capping complex region. The span at 561–576 (NKNRTRGPRRKLPTRV) shows a compositional bias: basic residues.

In terms of assembly, interacts (via C-terminus) with the CAP1-CAP2 F-actin capping protein complex. Interacts with INP52 (via SAC domain); the interaction is direct. Interacts with INP53 (via SAC domain); the interaction is direct. Interacts with RVS167. Interacts with SLA1. In terms of processing, phosphorylated by CDC28.

The protein localises to the cytoplasm. The protein resides in the cytoskeleton. It is found in the actin patch. It localises to the cell membrane. Its function is as follows. Recruits the capping protein complex to actin patches and the actomyosin contractile ring, and/or stabilizes their interaction. May serve as an adapter to link INP52 and INP53 to the cortical actin cytoskeleton. Binds F-actin. This Saccharomyces cerevisiae (strain ATCC 204508 / S288c) (Baker's yeast) protein is F-actin capping regulator BSP1 (BSP1).